The primary structure comprises 847 residues: Guanine nucleotide exchange factor VAV3 (847 aa).

The 119-residue stretch at 1–119 (MEPWKQCAQW…ETLSRLSRTP (119 aa)) folds into the Calponin-homology (CH) domain. Y141 is modified (phosphotyrosine). Residues 192 to 371 (IRSCCLAEIR…KDLAQYVNEV (180 aa)) form the DH domain. Positions 400–502 (RPQGDGEIRI…WLEQFEMALS (103 aa)) constitute a PH domain. The Phorbol-ester/DAG-type zinc-finger motif lies at 513-562 (FHDFKMHTFTRVTSCRVCQMLLRGTFYQGYLCFKCGAKAHKECLGRVDNC). The segment at 560–847 (DNCGRVNSVE…FPSTYVEEDE (288 aa)) is sufficient for interaction with ROS1. Positions 592–660 (PGLPKMQVIR…PSDAVKPSPC (69 aa)) constitute an SH3 1 domain. The 95-residue stretch at 672–766 (WYAGPMERLQ…TLDTTLQFPY (95 aa)) folds into the SH2 domain. The 60-residue stretch at 788–847 (KVLGIAIARYDFCARDMRELSLLKGDMVKIYTKMSANGWWRGEVNGRVGWFPSTYVEEDE) folds into the SH3 2 domain.

As to quaternary structure, interacts with the PH domain of APS. Interacts with ROS1; constitutive interaction that mediates VAV3 phosphorylation. Interacts (via SH2 domains) with the phosphorylated form of EPHA2. In terms of processing, phosphorylated. Phosphorylation can be mediated by ROS1. In osteoclasts, undergoes tyrosine phosphorylation in response to CSF1. Abundantly expressed in osteoclasts and mature osteoblasts. Also expressed in bone marrow macrophages (at protein level):.

Exchange factor for GTP-binding proteins RhoA, RhoG and, to a lesser extent, Rac1. Binds physically to the nucleotide-free states of those GTPases. Plays an important role in angiogenesis. Its recruitment by phosphorylated EPHA2 is critical for EFNA1-induced RAC1 GTPase activation and vascular endothelial cell migration and assembly. May be important for integrin-mediated signaling, at least in some cell types. In osteoclasts, along with SYK tyrosine kinase, required for signaling through integrin alpha-v/beta-1 (ITAGV-ITGB1), a crucial event for osteoclast proper cytoskeleton organization and function. This signaling pathway involves RAC1, but not RHO, activation. Necessary for proper wound healing. In the course of wound healing, required for the phagocytotic cup formation preceding macrophage phagocytosis of apoptotic neutrophils. Responsible for integrin beta-2-mediated macrophage adhesion and, to a lesser extent, contributes to beta-3-mediated adhesion. Does not affect integrin beta-1-mediated adhesion. The protein is Guanine nucleotide exchange factor VAV3 (Vav3) of Mus musculus (Mouse).